The chain runs to 890 residues: Agglutinin-like protein ARB_02240 (890 aa).

A signal peptide spans 1-20; the sequence is MRLTTSVLLWAATSVLQADA. Asparagine 106, asparagine 217, asparagine 583, and asparagine 654 each carry an N-linked (GlcNAc...) asparagine glycan. Residues 680-872 form a disordered region; sequence IPSGPTTRPE…GGAGSLSPST (193 aa). Composition is skewed to low complexity over residues 693–753 and 760–790; these read TSST…TDSS and TTST…HSST. Positions 791–802 are enriched in polar residues; sequence GSDPESTNTRHP. Low complexity-rich tracts occupy residues 803–812 and 821–837; these read SSTASGSTTT and SSSS…TATT. Gly residues predominate over residues 838–848; it reads TGGGSIPGSGT. Glycine 864 is lipidated: GPI-anchor amidated glycine. Residues 865 to 890 constitute a propeptide, removed in mature form; sequence AGSLSPSTWGKVVTCISSMALLVAFI.

This sequence belongs to the ALS family. Post-translationally, the GPI-anchor is attached to the protein in the endoplasmic reticulum and serves to target the protein to the cell surface. There, the glucosamine-inositol phospholipid moiety is cleaved off and the GPI-modified mannoprotein is covalently attached via its lipidless GPI glycan remnant to the 1,6-beta-glucan of the outer cell wall layer.

Its subcellular location is the secreted. The protein localises to the cell membrane. The protein resides in the cell wall. Functionally, cell surface adhesion protein which mediates cell agglutination and host tissue adherence. The polypeptide is Agglutinin-like protein ARB_02240 (Arthroderma benhamiae (strain ATCC MYA-4681 / CBS 112371) (Trichophyton mentagrophytes)).